Consider the following 744-residue polypeptide: Phosphoribosylformylglycinamidine synthase subunit PurL (744 aa).

His45 is a catalytic residue. 2 residues coordinate ATP: Tyr48 and Lys87. Mg(2+) is bound at residue Glu89. Substrate-binding positions include 90–93 and Arg112; that span reads SHNH. His91 (proton acceptor) is an active-site residue. Position 113 (Asp113) interacts with Mg(2+). Gln236 contacts substrate. Asp264 is a Mg(2+) binding site. Position 308 to 310 (308 to 310) interacts with substrate; it reads ESQ. ATP contacts are provided by Asn492 and Gly529. Asn530 provides a ligand contact to Mg(2+). Residue Ser532 participates in substrate binding.

This sequence belongs to the FGAMS family. Monomer. Part of the FGAM synthase complex composed of 1 PurL, 1 PurQ and 2 PurS subunits.

It localises to the cytoplasm. It carries out the reaction N(2)-formyl-N(1)-(5-phospho-beta-D-ribosyl)glycinamide + L-glutamine + ATP + H2O = 2-formamido-N(1)-(5-O-phospho-beta-D-ribosyl)acetamidine + L-glutamate + ADP + phosphate + H(+). It participates in purine metabolism; IMP biosynthesis via de novo pathway; 5-amino-1-(5-phospho-D-ribosyl)imidazole from N(2)-formyl-N(1)-(5-phospho-D-ribosyl)glycinamide: step 1/2. Functionally, part of the phosphoribosylformylglycinamidine synthase complex involved in the purines biosynthetic pathway. Catalyzes the ATP-dependent conversion of formylglycinamide ribonucleotide (FGAR) and glutamine to yield formylglycinamidine ribonucleotide (FGAM) and glutamate. The FGAM synthase complex is composed of three subunits. PurQ produces an ammonia molecule by converting glutamine to glutamate. PurL transfers the ammonia molecule to FGAR to form FGAM in an ATP-dependent manner. PurS interacts with PurQ and PurL and is thought to assist in the transfer of the ammonia molecule from PurQ to PurL. This chain is Phosphoribosylformylglycinamidine synthase subunit PurL, found in Erythrobacter litoralis (strain HTCC2594).